The sequence spans 355 residues: Guanine nucleotide-binding protein alpha-2 subunit (355 aa).

A disordered region spans residues 1 to 20; it reads MCFGGRGKDDEAEASRSREL. The G-alpha domain occupies 33 to 355; it reads KEVKLLLLGA…IQRNLKQLIL (323 aa). The interval 36 to 49 is G1 motif; it reads KLLLLGAGESGKST. Residues E44, S45, G46, K47, S48, T49, D151, L176, T182, G204, N270, K271, D273, and A328 each coordinate GTP. A Mg(2+)-binding site is contributed by S48. The interval 174–182 is G2 motif; the sequence is DLLRSRLRT. T182 provides a ligand contact to Mg(2+). A G3 motif region spans residues 197–206; it reads YRMFDVGGQR. The interval 266–273 is G4 motif; the sequence is ILFLNKID. The G5 motif stretch occupies residues 326 to 331; that stretch reads TNATDT.

This sequence belongs to the G-alpha family. G(q) subfamily. In terms of assembly, g proteins are composed of 3 units; alpha, beta and gamma. The alpha chain contains the guanine nucleotide binding site. The cofactor is Mg(2+).

Guanine nucleotide-binding proteins (G proteins) are involved as modulators or transducers in various transmembrane signaling systems. This Neurospora crassa (strain ATCC 24698 / 74-OR23-1A / CBS 708.71 / DSM 1257 / FGSC 987) protein is Guanine nucleotide-binding protein alpha-2 subunit (gna-2).